The sequence spans 68 residues: Large ribosomal subunit protein bL35 (68 aa).

This sequence belongs to the bacterial ribosomal protein bL35 family.

This is Large ribosomal subunit protein bL35 from Rickettsia akari (strain Hartford).